A 380-amino-acid chain; its full sequence is 1-deoxy-D-xylulose 5-phosphate reductoisomerase 2 (380 aa).

Residues Ser10, Gly11, Ser12, Ile13, Gly36, Lys37, Asn38, and Asn120 each contribute to the NADPH site. Lys121 serves as a coordination point for 1-deoxy-D-xylulose 5-phosphate. Glu122 is an NADPH binding site. Asp146 contributes to the Mn(2+) binding site. 1-deoxy-D-xylulose 5-phosphate is bound by residues Ser147, Glu148, Ser172, and His195. Glu148 contributes to the Mn(2+) binding site. Gly201 lines the NADPH pocket. 4 residues coordinate 1-deoxy-D-xylulose 5-phosphate: Ser208, Asn213, Lys214, and Glu217. Residue Glu217 participates in Mn(2+) binding.

The protein belongs to the DXR family. Mg(2+) serves as cofactor. It depends on Mn(2+) as a cofactor.

It catalyses the reaction 2-C-methyl-D-erythritol 4-phosphate + NADP(+) = 1-deoxy-D-xylulose 5-phosphate + NADPH + H(+). It participates in isoprenoid biosynthesis; isopentenyl diphosphate biosynthesis via DXP pathway; isopentenyl diphosphate from 1-deoxy-D-xylulose 5-phosphate: step 1/6. Its function is as follows. Catalyzes the NADPH-dependent rearrangement and reduction of 1-deoxy-D-xylulose-5-phosphate (DXP) to 2-C-methyl-D-erythritol 4-phosphate (MEP). In Bacillus thuringiensis subsp. konkukian (strain 97-27), this protein is 1-deoxy-D-xylulose 5-phosphate reductoisomerase 2.